The primary structure comprises 219 residues: Proteasome subunit beta type-9 (219 aa).

Residues 1 to 20 constitute a propeptide, removed in mature form; that stretch reads MLRAGAPTGDLPRAGEVHTG. The active-site Nucleophile is T21. N6-acetyllysine is present on residues K53 and K109.

This sequence belongs to the peptidase T1B family. As to quaternary structure, the 26S proteasome consists of a 20S proteasome core and two 19S regulatory subunits. The 20S proteasome core is composed of 28 subunits that are arranged in four stacked rings, resulting in a barrel-shaped structure. The two end rings are each formed by seven alpha subunits, and the two central rings are each formed by seven beta subunits. The catalytic chamber with the active sites is on the inside of the barrel. Component of the immunoproteasome, where it displaces the equivalent housekeeping subunit PSMB6. Component of the spermatoproteasome, a form of the proteasome specifically found in testis. (Microbial infection) Interacts with HIV-1 TAT protein. In terms of processing, autocleaved. The resulting N-terminal Thr residue of the mature subunit is responsible for the nucleophile proteolytic activity.

It is found in the cytoplasm. Its subcellular location is the nucleus. The catalysed reaction is Cleavage of peptide bonds with very broad specificity.. Its function is as follows. The proteasome is a multicatalytic proteinase complex which is characterized by its ability to cleave peptides with Arg, Phe, Tyr, Leu, and Glu adjacent to the leaving group at neutral or slightly basic pH. The proteasome has an ATP-dependent proteolytic activity. This subunit is involved in antigen processing to generate class I binding peptides. Replacement of PSMB6 by PSMB9 increases the capacity of the immunoproteasome to cleave model peptides after hydrophobic and basic residues. The sequence is that of Proteasome subunit beta type-9 (PSMB9) from Homo sapiens (Human).